The chain runs to 460 residues: Flavonol 3-O-glucosyltransferase (460 aa).

H23 functions as the Proton acceptor in the catalytic mechanism. The an anthocyanidin site is built by H23 and Q88. D123 (charge relay) is an active-site residue. T145 contacts UDP-alpha-D-glucose. Residue H154 participates in an anthocyanidin binding. Residues A339, Q341, H356, W359, N360, S361, and E364 each contribute to the UDP-alpha-D-glucose site. G379 contributes to the an anthocyanidin binding site. UDP-alpha-D-glucose is bound by residues D380 and Q381.

Belongs to the UDP-glycosyltransferase family.

It carries out the reaction a flavonol + UDP-alpha-D-glucose = a flavonol 3-O-beta-D-glucoside + UDP + H(+). It catalyses the reaction quercetin + UDP-alpha-D-glucose = quercetin 3-O-beta-D-glucoside + UDP + H(+). Its pathway is flavonoid metabolism. Functionally, flavonol 3-O-glucosyltransferase that catalyzes the transfer of glucose from UDP-glucose to the 3-OH position of quercetin and kaempferol. Possesses high quercetin 3-O-glucosyltransferase activity in vitro. Catalyzes the glycosylation of anthocyanins from UDP-glucose. Also active in vitro on benzoates and benzoate derivatives. This chain is Flavonol 3-O-glucosyltransferase, found in Arabidopsis thaliana (Mouse-ear cress).